We begin with the raw amino-acid sequence, 216 residues long: Redox-sensing transcriptional repressor Rex (216 aa).

A DNA-binding region (H-T-H motif) is located at residues 17 to 56; that stretch reads IYFRYLTFLHDAGTDRISSAELSDAIKFDAATIRRDFSYF. 91-96 contacts NAD(+); that stretch reads GAGNLG.

It belongs to the transcriptional regulatory Rex family. In terms of assembly, homodimer.

The protein resides in the cytoplasm. Its function is as follows. Modulates transcription in response to changes in cellular NADH/NAD(+) redox state. The protein is Redox-sensing transcriptional repressor Rex of Leuconostoc citreum (strain KM20).